The chain runs to 86 residues: Class II hydrophobin 2 (86 aa).

The first 15 residues, 1 to 15, serve as a signal peptide directing secretion; it reads MQFFAVALFATSALA. 4 cysteine pairs are disulfide-bonded: Cys-18–Cys-67, Cys-28–Cys-58, Cys-29–Cys-41, and Cys-68–Cys-79.

Belongs to the cerato-ulmin hydrophobin family. As to quaternary structure, homodimer. Homodimers further self-assemble to form highly ordered films at water-air interfaces through intermolecular interactions.

The protein localises to the secreted. Its subcellular location is the spore wall. It localises to the cell wall. Functionally, aerial growth, conidiation, and dispersal of filamentous fungi in the environment rely upon a capability of their secreting small amphipathic proteins called hydrophobins (HPBs) with low sequence identity. Class I can self-assemble into an outermost layer of rodlet bundles on aerial cell surfaces, conferring cellular hydrophobicity that supports fungal growth, development and dispersal; whereas Class II form highly ordered films at water-air interfaces through intermolecular interactions but contribute nothing to the rodlet structure. Hbf2 is a class II hydrophobin that is involved in sporuration. The sequence is that of Class II hydrophobin 2 from Hypocrea jecorina (Trichoderma reesei).